The following is a 448-amino-acid chain: Glutamyl-tRNA reductase (448 aa).

Residues 49–52, serine 109, 114–116, and glutamine 120 each bind substrate; these read TCNR and ETQ. The Nucleophile role is filled by cysteine 50. 189-194 is a binding site for NADP(+); that stretch reads GAGETG. The segment at 427–448 is disordered; that stretch reads PVDEVEETDATSAKAPLRALMR.

Belongs to the glutamyl-tRNA reductase family. Homodimer.

The enzyme catalyses (S)-4-amino-5-oxopentanoate + tRNA(Glu) + NADP(+) = L-glutamyl-tRNA(Glu) + NADPH + H(+). The protein operates within porphyrin-containing compound metabolism; protoporphyrin-IX biosynthesis; 5-aminolevulinate from L-glutamyl-tRNA(Glu): step 1/2. Its function is as follows. Catalyzes the NADPH-dependent reduction of glutamyl-tRNA(Glu) to glutamate 1-semialdehyde (GSA). The polypeptide is Glutamyl-tRNA reductase (Exiguobacterium sp. (strain ATCC BAA-1283 / AT1b)).